The sequence spans 470 residues: 3-isopropylmalate dehydratase large subunit (470 aa).

Residues cysteine 349, cysteine 409, and cysteine 412 each contribute to the [4Fe-4S] cluster site.

It belongs to the aconitase/IPM isomerase family. LeuC type 1 subfamily. As to quaternary structure, heterodimer of LeuC and LeuD. [4Fe-4S] cluster serves as cofactor.

It catalyses the reaction (2R,3S)-3-isopropylmalate = (2S)-2-isopropylmalate. Its pathway is amino-acid biosynthesis; L-leucine biosynthesis; L-leucine from 3-methyl-2-oxobutanoate: step 2/4. Functionally, catalyzes the isomerization between 2-isopropylmalate and 3-isopropylmalate, via the formation of 2-isopropylmaleate. In Afipia carboxidovorans (strain ATCC 49405 / DSM 1227 / KCTC 32145 / OM5) (Oligotropha carboxidovorans), this protein is 3-isopropylmalate dehydratase large subunit.